The following is a 595-amino-acid chain: DNA ligase (595 aa).

Residues 32–36 (DEKYD), 81–82 (SL), and Glu113 contribute to the NAD(+) site. Residue Lys115 is the N6-AMP-lysine intermediate of the active site. Positions 136, 178, 296, and 320 each coordinate NAD(+). 4 residues coordinate Zn(2+): Cys414, Cys417, Cys432, and Cys438.

Belongs to the NAD-dependent DNA ligase family. LigA subfamily. The cofactor is Mg(2+). It depends on Mn(2+) as a cofactor.

It carries out the reaction NAD(+) + (deoxyribonucleotide)n-3'-hydroxyl + 5'-phospho-(deoxyribonucleotide)m = (deoxyribonucleotide)n+m + AMP + beta-nicotinamide D-nucleotide.. In terms of biological role, DNA ligase that catalyzes the formation of phosphodiester linkages between 5'-phosphoryl and 3'-hydroxyl groups in double-stranded DNA using NAD as a coenzyme and as the energy source for the reaction. It is essential for DNA replication and repair of damaged DNA. This Blochmanniella pennsylvanica (strain BPEN) protein is DNA ligase.